A 428-amino-acid chain; its full sequence is MKKFDKSIAAFEEAQDLMPGGVNSPVRAFKSVGMNPLFMERGKGSKVYDIDGNEYIDYVLSWGPLIHGHANDRVVEALKSVAERGTSFGAPTEIENKLAKLVIERVPSIEIVRMVNSGTEATMSALRLARGYTGRNKILKFIGCYHGHGDSLLIKAGSGVATLGLPDSPGVPEGVAKNTITVAYNDLESVKYAFEQFGDDIACVIVEPVAGNMGVVPPQPGFLEGLREVTEQNGALLIFDEVMTGFRVAYNCGQGYYGVTPDLTCLGKVIGGGLPVGAYGGKAEIMRQIAPSGPIYQAGTLSGNPLAMAAGYETLVQLTPESYVEFERKAEMLEAGLRKAAEKHGIPHHINRAGSMIGIFFTDEPVINYDAAKSSNLEFFAAYYREMVEQGVFLPPSQFEGLFLSTAHSDADIEATIAAAEIAMSKLK.

The residue at position 268 (K268) is an N6-(pyridoxal phosphate)lysine.

It belongs to the class-III pyridoxal-phosphate-dependent aminotransferase family. HemL subfamily. In terms of assembly, homodimer. It depends on pyridoxal 5'-phosphate as a cofactor.

It localises to the cytoplasm. It carries out the reaction (S)-4-amino-5-oxopentanoate = 5-aminolevulinate. The protein operates within porphyrin-containing compound metabolism; protoporphyrin-IX biosynthesis; 5-aminolevulinate from L-glutamyl-tRNA(Glu): step 2/2. This chain is Glutamate-1-semialdehyde 2,1-aminomutase 1, found in Bacillus cereus (strain G9842).